Here is a 340-residue protein sequence, read N- to C-terminus: Uroporphyrinogen decarboxylase (340 aa).

Residues 23 to 27 (RQAGR), aspartate 72, tyrosine 147, threonine 202, and histidine 316 each bind substrate.

It belongs to the uroporphyrinogen decarboxylase family. In terms of assembly, homodimer.

The protein localises to the cytoplasm. The catalysed reaction is uroporphyrinogen III + 4 H(+) = coproporphyrinogen III + 4 CO2. It participates in porphyrin-containing compound metabolism; protoporphyrin-IX biosynthesis; coproporphyrinogen-III from 5-aminolevulinate: step 4/4. Its function is as follows. Catalyzes the decarboxylation of four acetate groups of uroporphyrinogen-III to yield coproporphyrinogen-III. The protein is Uroporphyrinogen decarboxylase of Trichlorobacter lovleyi (strain ATCC BAA-1151 / DSM 17278 / SZ) (Geobacter lovleyi).